Consider the following 190-residue polypeptide: UPF0301 protein Pfl01_5311 (190 aa).

This sequence belongs to the UPF0301 (AlgH) family.

The chain is UPF0301 protein Pfl01_5311 from Pseudomonas fluorescens (strain Pf0-1).